Consider the following 271-residue polypeptide: Formamidopyrimidine-DNA glycosylase (271 aa).

Catalysis depends on P2, which acts as the Schiff-base intermediate with DNA. The Proton donor role is filled by E3. The active-site Proton donor; for beta-elimination activity is K57. DNA contacts are provided by H90, R109, and K151. The FPG-type zinc-finger motif lies at 236-270 (HVYGRGGETCTSCGNLLSEIRLGQRTTVFCGICQT). Catalysis depends on R260, which acts as the Proton donor; for delta-elimination activity.

This sequence belongs to the FPG family. As to quaternary structure, monomer. The cofactor is Zn(2+).

It carries out the reaction Hydrolysis of DNA containing ring-opened 7-methylguanine residues, releasing 2,6-diamino-4-hydroxy-5-(N-methyl)formamidopyrimidine.. The catalysed reaction is 2'-deoxyribonucleotide-(2'-deoxyribose 5'-phosphate)-2'-deoxyribonucleotide-DNA = a 3'-end 2'-deoxyribonucleotide-(2,3-dehydro-2,3-deoxyribose 5'-phosphate)-DNA + a 5'-end 5'-phospho-2'-deoxyribonucleoside-DNA + H(+). Its function is as follows. Involved in base excision repair of DNA damaged by oxidation or by mutagenic agents. Acts as a DNA glycosylase that recognizes and removes damaged bases. Has a preference for oxidized purines, such as 7,8-dihydro-8-oxoguanine (8-oxoG). Has AP (apurinic/apyrimidinic) lyase activity and introduces nicks in the DNA strand. Cleaves the DNA backbone by beta-delta elimination to generate a single-strand break at the site of the removed base with both 3'- and 5'-phosphates. In Shewanella baltica (strain OS155 / ATCC BAA-1091), this protein is Formamidopyrimidine-DNA glycosylase.